The chain runs to 540 residues: Glucose-6-phosphate isomerase (540 aa).

The active-site Proton donor is the Glu-350. Active-site residues include His-381 and Lys-503.

Belongs to the GPI family.

It is found in the cytoplasm. It carries out the reaction alpha-D-glucose 6-phosphate = beta-D-fructose 6-phosphate. The protein operates within carbohydrate biosynthesis; gluconeogenesis. Its pathway is carbohydrate degradation; glycolysis; D-glyceraldehyde 3-phosphate and glycerone phosphate from D-glucose: step 2/4. Its function is as follows. Catalyzes the reversible isomerization of glucose-6-phosphate to fructose-6-phosphate. This chain is Glucose-6-phosphate isomerase, found in Paraburkholderia xenovorans (strain LB400).